The chain runs to 90 residues: Probable Fe(2+)-trafficking protein (90 aa).

It belongs to the Fe(2+)-trafficking protein family.

In terms of biological role, could be a mediator in iron transactions between iron acquisition and iron-requiring processes, such as synthesis and/or repair of Fe-S clusters in biosynthetic enzymes. This Variovorax paradoxus (strain S110) protein is Probable Fe(2+)-trafficking protein.